Consider the following 593-residue polypeptide: Elongation factor 4 (593 aa).

Positions 2-181 (DKIRNFCIIA…AVIERIPHPQ (180 aa)) constitute a tr-type G domain. Residues 14–19 (DHGKST) and 128–131 (NKCD) contribute to the GTP site.

Belongs to the TRAFAC class translation factor GTPase superfamily. Classic translation factor GTPase family. LepA subfamily.

The protein resides in the cell inner membrane. The catalysed reaction is GTP + H2O = GDP + phosphate + H(+). In terms of biological role, required for accurate and efficient protein synthesis under certain stress conditions. May act as a fidelity factor of the translation reaction, by catalyzing a one-codon backward translocation of tRNAs on improperly translocated ribosomes. Back-translocation proceeds from a post-translocation (POST) complex to a pre-translocation (PRE) complex, thus giving elongation factor G a second chance to translocate the tRNAs correctly. Binds to ribosomes in a GTP-dependent manner. In Bacteroides fragilis (strain ATCC 25285 / DSM 2151 / CCUG 4856 / JCM 11019 / LMG 10263 / NCTC 9343 / Onslow / VPI 2553 / EN-2), this protein is Elongation factor 4.